The sequence spans 639 residues: Eukaryotic translation initiation factor 2-alpha kinase 2 (639 aa).

A Protein kinase domain is found at 171–588; the sequence is FEEYSLLGRG…LEVLNCGLLL (418 aa). ATP-binding positions include 177–185 and Lys200; that span reads LGRGGFGSV. Over residues 298 to 320 the composition is skewed to low complexity; it reads ISTSRKSSYSSTTESSNFENLES. The disordered stretch occupies residues 298-322; sequence ISTSRKSSYSSTTESSNFENLESPR. Asp417 acts as the Proton acceptor in catalysis.

Belongs to the protein kinase superfamily. Ser/Thr protein kinase family. GCN2 subfamily. In terms of processing, autophosphorylated.

The catalysed reaction is L-seryl-[protein] + ATP = O-phospho-L-seryl-[protein] + ADP + H(+). It carries out the reaction L-threonyl-[protein] + ATP = O-phospho-L-threonyl-[protein] + ADP + H(+). In terms of biological role, mediates down-regulation of protein synthesis in response to stress conditions by the phosphorylation of the alpha subunit of eIF-2 (tif211) on 'Ser-52'. Protein synthesis is inhibited at the level of initiation. Activity is inhibited in the presence of heme. The polypeptide is Eukaryotic translation initiation factor 2-alpha kinase 2 (hri2) (Schizosaccharomyces pombe (strain 972 / ATCC 24843) (Fission yeast)).